The following is a 363-amino-acid chain: Protein-arginine kinase (363 aa).

One can recognise a Phosphagen kinase C-terminal domain in the interval 24–254 (IVLSSRIRLA…AQLIEQERSA (231 aa)). ATP is bound by residues 27 to 31 (SSRIR), H92, R125, 176 to 180 (RASVM), and 207 to 212 (RGIYGE). Residues 337 to 342 (RDARRA) carry the RDXXRA motif of the pArg binding pocket involved in allosteric regulation motif.

It belongs to the ATP:guanido phosphotransferase family.

It carries out the reaction L-arginyl-[protein] + ATP = N(omega)-phospho-L-arginyl-[protein] + ADP + H(+). Its activity is regulated as follows. Appears to be allosterically activated by the binding of pArg-containing polypeptides to the pArg-binding pocket localized in the C-terminal domain of McsB. Functionally, catalyzes the specific phosphorylation of arginine residues in a large number of proteins. Is part of the bacterial stress response system. Protein arginine phosphorylation has a physiologically important role and is involved in the regulation of many critical cellular processes, such as protein homeostasis, motility, competence, and stringent and stress responses, by regulating gene expression and protein activity. The chain is Protein-arginine kinase from Bacillus velezensis (strain DSM 23117 / BGSC 10A6 / LMG 26770 / FZB42) (Bacillus amyloliquefaciens subsp. plantarum).